A 690-amino-acid polypeptide reads, in one-letter code: Protein arginine N-methyltransferase 7 (690 aa).

SAM-dependent MTase PRMT-type domains are found at residues 14 to 357 and 366 to 690; these read QNSW…YSLW and TKSV…QKKL.

Belongs to the class I-like SAM-binding methyltransferase superfamily. Protein arginine N-methyltransferase family. PRMT7 subfamily.

In terms of biological role, essential arginine methyltransferase that can both catalyze the formation of omega-N monomethylarginine (MMA) and symmetrical dimethylarginine (sDMA). Specifically mediates the symmetrical dimethylation of arginine residues in the small nuclear ribonucleoproteins SmD1 and SmD3. This Drosophila yakuba (Fruit fly) protein is Protein arginine N-methyltransferase 7 (Art7).